The primary structure comprises 486 residues: ATP synthase subunit beta (486 aa).

164–171 is a binding site for ATP; sequence GGAGVGKT.

The protein belongs to the ATPase alpha/beta chains family. In terms of assembly, F-type ATPases have 2 components, CF(1) - the catalytic core - and CF(0) - the membrane proton channel. CF(1) has five subunits: alpha(3), beta(3), gamma(1), delta(1), epsilon(1). CF(0) has four main subunits: a(1), b(1), b'(1) and c(9-12).

The protein resides in the cellular thylakoid membrane. The enzyme catalyses ATP + H2O + 4 H(+)(in) = ADP + phosphate + 5 H(+)(out). Functionally, produces ATP from ADP in the presence of a proton gradient across the membrane. The catalytic sites are hosted primarily by the beta subunits. The chain is ATP synthase subunit beta from Prochlorococcus marinus (strain MIT 9515).